A 133-amino-acid polypeptide reads, in one-letter code: Large ribosomal subunit protein eL32z (133 aa).

The protein belongs to the eukaryotic ribosomal protein eL32 family.

This chain is Large ribosomal subunit protein eL32z (RPL32A), found in Arabidopsis thaliana (Mouse-ear cress).